The following is a 248-amino-acid chain: Isoprenyl transferase (248 aa).

Residue D23 is part of the active site. D23 is a Mg(2+) binding site. Substrate contacts are provided by residues 24 to 27 (GNGR), W28, R36, H40, and 68 to 70 (STE). N71 functions as the Proton acceptor in the catalytic mechanism. Substrate contacts are provided by residues W72, R74, R185, and 191 to 193 (RIS). Mg(2+) is bound at residue E204.

It belongs to the UPP synthase family. In terms of assembly, homodimer. Mg(2+) is required as a cofactor.

In terms of biological role, catalyzes the condensation of isopentenyl diphosphate (IPP) with allylic pyrophosphates generating different type of terpenoids. The sequence is that of Isoprenyl transferase from Neisseria gonorrhoeae (strain ATCC 700825 / FA 1090).